A 193-amino-acid polypeptide reads, in one-letter code: MTEYLLLFVGTVLVNNFVLVKFLGLCPFMGVSKKLETAIGMGLATTFVLTLASVCAWMVNSFILLPLGLIYLRTLAFILVIAVVVQFTELVVRKTSPTLYRLLGIFLPLITTNCAVLGVALLNVNQSHNFMQSAVYGFSAAAGFSLVMVLFAAIRERLAVADVPAPFRRSSIALITAGLMSLAFMGFTGLVKF.

6 helical membrane-spanning segments follow: residues 5–25 (LLLF…FLGL), 39–59 (IGMG…AWMV), 62–82 (FILL…LVIA), 102–122 (LLGI…VALL), 134–154 (AVYG…FAAI), and 171–191 (SIAL…TGLV).

This sequence belongs to the NqrDE/RnfAE family. As to quaternary structure, the complex is composed of six subunits: RnfA, RnfB, RnfC, RnfD, RnfE and RnfG.

The protein localises to the cell inner membrane. In terms of biological role, part of a membrane-bound complex that couples electron transfer with translocation of ions across the membrane. This Yersinia pestis (strain Pestoides F) protein is Ion-translocating oxidoreductase complex subunit A.